The chain runs to 284 residues: Efem/EfeO family lipoprotein (284 aa).

The first 17 residues, 1–17 (MKKLTTLLLASTLLIAA), serve as a signal peptide directing secretion. Cys18 carries the N-palmitoyl cysteine lipid modification. Cys18 carries the S-diacylglycerol cysteine lipid modification.

Belongs to the EfeM/EfeO family.

The protein localises to the cell membrane. The chain is Efem/EfeO family lipoprotein from Staphylococcus aureus (strain MRSA252).